A 205-amino-acid polypeptide reads, in one-letter code: ATP-dependent dethiobiotin synthetase BioD (205 aa).

Residue threonine 16 coordinates Mg(2+). Residue lysine 32 is part of the active site. Threonine 36 lines the substrate pocket. Glutamate 97 is a Mg(2+) binding site. 97–100 is an ATP binding site; the sequence is EGAG.

This sequence belongs to the dethiobiotin synthetase family. Homodimer. It depends on Mg(2+) as a cofactor.

It localises to the cytoplasm. The catalysed reaction is (7R,8S)-7,8-diammoniononanoate + CO2 + ATP = (4R,5S)-dethiobiotin + ADP + phosphate + 3 H(+). It participates in cofactor biosynthesis; biotin biosynthesis; biotin from 7,8-diaminononanoate: step 1/2. Its function is as follows. Catalyzes a mechanistically unusual reaction, the ATP-dependent insertion of CO2 between the N7 and N8 nitrogen atoms of 7,8-diaminopelargonic acid (DAPA, also called 7,8-diammoniononanoate) to form a ureido ring. In Paramagnetospirillum magneticum (strain ATCC 700264 / AMB-1) (Magnetospirillum magneticum), this protein is ATP-dependent dethiobiotin synthetase BioD.